Consider the following 304-residue polypeptide: E3 ubiquitin-protein ligase RNF144B (304 aa).

The interval 27–245 is TRIAD supradomain; the sequence is PLVTCKLCLC…YDRGPCRNKL (219 aa). Zn(2+) contacts are provided by Cys-31, Cys-34, Cys-54, Cys-57, Cys-122, Cys-127, Cys-146, Cys-149, Cys-154, Cys-157, His-162, Cys-167, Cys-194, and Cys-197. The RING-type 1 zinc-finger motif lies at 31–81; that stretch reads CKLCLCEQSLDKMTTLQECRCIFCTACLKQYMQLAIREGCGSPITCPDMVC. The IBR-type zinc finger occupies 102-167; it reads QLYQRLKFER…KDAWHAEVSC (66 aa). The RING-type 2; atypical zinc-finger motif lies at 194–223; sequence CPVCRVYIERNEGCAQMMCKNCKHTFCWYC. The active site involves Cys-207. Zn(2+)-binding residues include Cys-212, Cys-215, Cys-220, Cys-223, His-235, and Cys-241. Residues 259–279 traverse the membrane as a helical segment; it reads VVGILVGLGIIALVTSPLLLL.

The protein belongs to the RBR family. RNF144 subfamily. As to quaternary structure, interacts with UBE2L3, UBE2L6 and LCMT2, as well as with BAX. Interacts with TBK1; this interaction inhibits TBK1 phosphorylation and 'Lys-63'-linked polyubiquitination. In terms of processing, auto-ubiquitinated.

It localises to the mitochondrion membrane. It is found in the cytoplasm. It catalyses the reaction [E2 ubiquitin-conjugating enzyme]-S-ubiquitinyl-L-cysteine + [acceptor protein]-L-lysine = [E2 ubiquitin-conjugating enzyme]-L-cysteine + [acceptor protein]-N(6)-ubiquitinyl-L-lysine.. It functions in the pathway protein modification; protein ubiquitination. Functionally, E3 ubiquitin-protein ligase which accepts ubiquitin from E2 ubiquitin-conjugating enzymes UBE2L3 and UBE2L6 in the form of a thioester and then directly transfers the ubiquitin to targeted substrates such as LCMT2, thereby promoting their degradation. Induces apoptosis via a p53/TP53-dependent but caspase-independent mechanism. Plays a crucial role in maintaining the genomic stability by controlling the degradation of multiple proteins involved in mitotic progression and DNA damage. Regulates epithelial homeostasis by mediating degradation of CDKN1A and isoform 2 of TP63. Plays a regulatory role in innate immunity by negatively regulating IRF3 activation and IFN-beta production. Mechanistically, inhibits TBK1 phosphorylation and 'Lys-63'-linked polyubiquitination independently of its E3 ligase activity. Alternatively, promotes 'Lys-27' and 'Lys-33'-linked ubiquitination of IFIH1/MDA5, promoting selective autophagic degradation of IFIH1/MDA5 to inhibit antiviral response. This chain is E3 ubiquitin-protein ligase RNF144B (RNF144B), found in Bos taurus (Bovine).